The sequence spans 429 residues: Antho-RFamide neuropeptides type 2 (429 aa).

The signal sequence occupies residues 1–22 (MTTVSYVTILLTVLVQVLTSDA). The propeptide occupies 23 to 233 (KATNNKRELS…EFQGRFGRED (211 aa)). A compositionally biased stretch (basic and acidic residues) spans 230 to 371 (GREDQGRFGR…EDIAKEDQGR (142 aa)). A disordered region spans residues 230–429 (GREDQGRFGR…KSDDALAKIS (200 aa)). Position 234 is a pyrrolidone carboxylic acid (Gln-234). A Phenylalanine amide modification is found at Phe-237. The propeptide occupies 239 to 241 (RED). A Pyrrolidone carboxylic acid modification is found at Gln-242. At Phe-245 the chain carries Phenylalanine amide. Residues 247-249 (RED) constitute a propeptide that is removed on maturation. Gln-250 carries the post-translational modification Pyrrolidone carboxylic acid. Phe-253 bears the Phenylalanine amide mark. Residues 255-257 (RED) constitute a propeptide that is removed on maturation. Gln-258 bears the Pyrrolidone carboxylic acid mark. A Phenylalanine amide modification is found at Phe-261. The propeptide occupies 263–265 (RED). Residue Gln-266 is modified to Pyrrolidone carboxylic acid. Phenylalanine amide is present on Phe-269. Positions 271 to 273 (RED) are excised as a propeptide. Residue Gln-274 is modified to Pyrrolidone carboxylic acid. Phe-277 is subject to Phenylalanine amide. The propeptide occupies 279–289 (RELQGRFGRED). Residue Gln-290 is modified to Pyrrolidone carboxylic acid. Phe-293 bears the Phenylalanine amide mark. The propeptide occupies 295–297 (RED). Gln-298 is modified (pyrrolidone carboxylic acid). The residue at position 301 (Phe-301) is a Phenylalanine amide. Residues 303 to 305 (RED) constitute a propeptide that is removed on maturation. Residue Gln-306 is modified to Pyrrolidone carboxylic acid. At Phe-309 the chain carries Phenylalanine amide. The propeptide occupies 311 to 321 (RELQGRFGRED). Pyrrolidone carboxylic acid is present on Gln-322. A Phenylalanine amide modification is found at Phe-325. Positions 327-329 (RED) are excised as a propeptide. A Pyrrolidone carboxylic acid modification is found at Gln-330. At Phe-333 the chain carries Phenylalanine amide. The propeptide occupies 335–342 (REDLAKED). At Gln-343 the chain carries Pyrrolidone carboxylic acid. Phe-346 carries the post-translational modification Phenylalanine amide. Residues 348 to 355 (REDLAKED) constitute a propeptide that is removed on maturation. Gln-356 carries the pyrrolidone carboxylic acid modification. Residue Phe-359 is modified to Phenylalanine amide. A propeptide spanning residues 361–368 (REDIAKED) is cleaved from the precursor. Gln-369 bears the Pyrrolidone carboxylic acid mark. Phenylalanine amide is present on Phe-372. Positions 374–429 (RNAAAAAKKRTIDVIDIESDPKPQTRFRDGKDMQEKRKVEKKDKIEKSDDALAKIS) are excised as a propeptide. Positions 392–429 (SDPKPQTRFRDGKDMQEKRKVEKKDKIEKSDDALAKIS) are enriched in basic and acidic residues.

It belongs to the FARP (FMRFamide related peptide) family.

It is found in the secreted. In terms of biological role, not known but it could act as a transmitter at neuromuscular synapses. The polypeptide is Antho-RFamide neuropeptides type 2 (Anthopleura elegantissima (Green aggregating anemone)).